The primary structure comprises 446 residues: tRNA modification GTPase MnmE (446 aa).

The (6S)-5-formyl-5,6,7,8-tetrahydrofolate site is built by Arg22, Glu80, and Lys119. In terms of domain architecture, TrmE-type G spans 215–370 (GLSLVIAGRP…LKKVIKQVVG (156 aa)). Asn225 is a binding site for K(+). GTP-binding positions include 225–230 (NAGKST), 244–250 (TEIAGTT), and 269–272 (DTAG). A Mg(2+)-binding site is contributed by Ser229. K(+) is bound by residues Thr244, Ile246, and Thr249. Thr250 provides a ligand contact to Mg(2+). Lys446 is a (6S)-5-formyl-5,6,7,8-tetrahydrofolate binding site.

This sequence belongs to the TRAFAC class TrmE-Era-EngA-EngB-Septin-like GTPase superfamily. TrmE GTPase family. In terms of assembly, homodimer. Heterotetramer of two MnmE and two MnmG subunits. K(+) is required as a cofactor.

It localises to the cytoplasm. Functionally, exhibits a very high intrinsic GTPase hydrolysis rate. Involved in the addition of a carboxymethylaminomethyl (cmnm) group at the wobble position (U34) of certain tRNAs, forming tRNA-cmnm(5)s(2)U34. This Legionella pneumophila (strain Corby) protein is tRNA modification GTPase MnmE.